The primary structure comprises 145 residues: Transcriptional regulator MraZ (145 aa).

SpoVT-AbrB domains are found at residues 5–50 (TFNH…ALPQ) and 81–124 (AHEV…DRAA).

This sequence belongs to the MraZ family. As to quaternary structure, forms oligomers.

The protein resides in the cytoplasm. The protein localises to the nucleoid. In Anaeromyxobacter dehalogenans (strain 2CP-1 / ATCC BAA-258), this protein is Transcriptional regulator MraZ.